Consider the following 226-residue polypeptide: Cytidylate kinase (226 aa).

12-20 (GPSGAGKGT) provides a ligand contact to ATP.

Belongs to the cytidylate kinase family. Type 1 subfamily.

The protein resides in the cytoplasm. The catalysed reaction is CMP + ATP = CDP + ADP. It catalyses the reaction dCMP + ATP = dCDP + ADP. The polypeptide is Cytidylate kinase (Vibrio vulnificus (strain CMCP6)).